A 287-amino-acid polypeptide reads, in one-letter code: Tetraspanning orphan receptor (287 aa).

Topologically, residues 1–27 (MSPSLVSDTQKHERGSHGVKIKHFSPY) are extracellular. Residues 28–48 (IAVCVTTFSLAFCCFMVHGAI) form a helical membrane-spanning segment. The Cytoplasmic portion of the chain corresponds to 49–55 (TRQPTHL). Residues 56 to 76 (LPFFFIQVFDLIICLIHILGF) form a helical membrane-spanning segment. Residues 77–91 (MSSTSDIRLVIHTKT) lie on the Extracellular side of the membrane. The helical transmembrane segment at 92–114 (GPIYIKSTGLTFIILSISRMMLA) threads the bilayer. The Cytoplasmic portion of the chain corresponds to 115–287 (FKAYCLGMVW…NASSNAHSSC (173 aa)). Residues 165–190 (NNSIGNSGSPNEPNTRPRPDTITYDP) form a disordered region.

Interacts (via N-terminal extracellular domain) with human C2a.

Its subcellular location is the cell membrane. In terms of biological role, cell surface receptor that binds to human complement C2a protein. This results in inhibition of the classical and lectin pathways of complement activation, probably due to interference with binding of C2a to C4b and interference with cleavage by C1 or MASP2 such that C3 convertase cannot be formed. This infers resistance to complement-mediated cell lysis, allowing parasite survival and infection. The sequence is that of Tetraspanning orphan receptor from Trypanosoma cruzi.